A 161-amino-acid polypeptide reads, in one-letter code: MNLSEFEREVKELFDADLVERAKNLKKSGNIFNPIFYIFFTRIVELSAIINDMVLPNRYELEELFRTRKDFLQIDYGTIGETIRRAWLYERERGVEFTFSNSVEDMLYLLYRMGKLQGKLDRIIMKYAEWEKNKLAELYFTILKILLELEDRINREIREEA.

This is an uncharacterized protein from Archaeoglobus fulgidus (strain ATCC 49558 / DSM 4304 / JCM 9628 / NBRC 100126 / VC-16).